A 444-amino-acid chain; its full sequence is Na(+)/H(+) antiporter NhaA (444 aa).

The next 11 membrane-spanning stretches (helical) occupy residues 27-47 (TTGL…NSPL), 72-92 (IHHW…GLEI), 108-128 (MLPI…YYAI), 136-156 (AGWG…LVLL), 167-187 (FLVA…ALFY), 190-210 (EINM…VSFN), 212-232 (FGIH…LFML), 312-332 (HLPV…GVSI), 349-369 (VMAG…YLAI), 385-405 (VFGV…IAEL), and 419-439 (IGIL…LRFI).

This sequence belongs to the NhaA Na(+)/H(+) (TC 2.A.33) antiporter family.

The protein localises to the cell inner membrane. The catalysed reaction is Na(+)(in) + 2 H(+)(out) = Na(+)(out) + 2 H(+)(in). Its function is as follows. Na(+)/H(+) antiporter that extrudes sodium in exchange for external protons. In Sulfurimonas denitrificans (strain ATCC 33889 / DSM 1251) (Thiomicrospira denitrificans (strain ATCC 33889 / DSM 1251)), this protein is Na(+)/H(+) antiporter NhaA.